A 296-amino-acid chain; its full sequence is MFIIAALYHFTRFENPAALKPALLELCKAQGVTGTLLLAPEGVNGTITGSRAGIDAVLAHLKALPGCDGLEWKEAQSERANFGKMKVRIKREIVTMKQPDVDPRAKTGHYVTPADWNALIAQPDVAVIDTRNDYEVEIGTFEGAIDPKTRSFGEFPAWWEANKHRFHNKKIAMFCTGGIRCEKSTNYLLGQGVEDVFHLKGGILQYLEDIPQDQSTWNGACFVFDNRVSVGHGLQEGPHLLCHGCRQPILPADKKRAEYEEGVSCHKCFDQTTSEDKARFRERQKQIELARKRARA.

The Rhodanese domain occupies Ala-121 to Ser-215. The active-site Cysteine persulfide intermediate is Cys-175.

This sequence belongs to the TrhO family.

It carries out the reaction uridine(34) in tRNA + AH2 + O2 = 5-hydroxyuridine(34) in tRNA + A + H2O. Functionally, catalyzes oxygen-dependent 5-hydroxyuridine (ho5U) modification at position 34 in tRNAs. This chain is tRNA uridine(34) hydroxylase, found in Roseobacter denitrificans (strain ATCC 33942 / OCh 114) (Erythrobacter sp. (strain OCh 114)).